The following is an 87-amino-acid chain: Large ribosomal subunit protein bL27 (87 aa).

Positions 1–22 (MAHKKGQGSVKNGRDSRSKRLG) are disordered.

The protein belongs to the bacterial ribosomal protein bL27 family.

This chain is Large ribosomal subunit protein bL27, found in Akkermansia muciniphila (strain ATCC BAA-835 / DSM 22959 / JCM 33894 / BCRC 81048 / CCUG 64013 / CIP 107961 / Muc).